Here is a 338-residue protein sequence, read N- to C-terminus: Glycerol-3-phosphate dehydrogenase [NAD(P)+] (338 aa).

3 residues coordinate NADPH: serine 13, tryptophan 14, and lysine 108. Residues lysine 108, glycine 139, and serine 141 each coordinate sn-glycerol 3-phosphate. Alanine 143 is a binding site for NADPH. Residues lysine 194, aspartate 247, serine 257, arginine 258, and asparagine 259 each contribute to the sn-glycerol 3-phosphate site. Lysine 194 (proton acceptor) is an active-site residue. Arginine 258 lines the NADPH pocket. NADPH is bound by residues valine 282 and glutamate 284.

It belongs to the NAD-dependent glycerol-3-phosphate dehydrogenase family.

The protein resides in the cytoplasm. The enzyme catalyses sn-glycerol 3-phosphate + NAD(+) = dihydroxyacetone phosphate + NADH + H(+). The catalysed reaction is sn-glycerol 3-phosphate + NADP(+) = dihydroxyacetone phosphate + NADPH + H(+). It participates in membrane lipid metabolism; glycerophospholipid metabolism. Its function is as follows. Catalyzes the reduction of the glycolytic intermediate dihydroxyacetone phosphate (DHAP) to sn-glycerol 3-phosphate (G3P), the key precursor for phospholipid synthesis. The chain is Glycerol-3-phosphate dehydrogenase [NAD(P)+] from Streptococcus pyogenes serotype M2 (strain MGAS10270).